Here is a 346-residue protein sequence, read N- to C-terminus: Phosphoribosylformylglycinamidine cyclo-ligase (346 aa).

It belongs to the AIR synthase family.

Its subcellular location is the cytoplasm. The catalysed reaction is 2-formamido-N(1)-(5-O-phospho-beta-D-ribosyl)acetamidine + ATP = 5-amino-1-(5-phospho-beta-D-ribosyl)imidazole + ADP + phosphate + H(+). Its pathway is purine metabolism; IMP biosynthesis via de novo pathway; 5-amino-1-(5-phospho-D-ribosyl)imidazole from N(2)-formyl-N(1)-(5-phospho-D-ribosyl)glycinamide: step 2/2. This is Phosphoribosylformylglycinamidine cyclo-ligase from Shewanella pealeana (strain ATCC 700345 / ANG-SQ1).